Consider the following 501-residue polypeptide: ATP synthase subunit alpha (501 aa).

Position 169-176 (G169–T176) interacts with ATP.

The protein belongs to the ATPase alpha/beta chains family. As to quaternary structure, F-type ATPases have 2 components, CF(1) - the catalytic core - and CF(0) - the membrane proton channel. CF(1) has five subunits: alpha(3), beta(3), gamma(1), delta(1), epsilon(1). CF(0) has three main subunits: a(1), b(2) and c(9-12). The alpha and beta chains form an alternating ring which encloses part of the gamma chain. CF(1) is attached to CF(0) by a central stalk formed by the gamma and epsilon chains, while a peripheral stalk is formed by the delta and b chains.

Its subcellular location is the cell membrane. It catalyses the reaction ATP + H2O + 4 H(+)(in) = ADP + phosphate + 5 H(+)(out). Its function is as follows. Produces ATP from ADP in the presence of a proton gradient across the membrane. The alpha chain is a regulatory subunit. The chain is ATP synthase subunit alpha from Streptococcus agalactiae serotype Ia (strain ATCC 27591 / A909 / CDC SS700).